The primary structure comprises 943 residues: Leucine--tRNA ligase (943 aa).

Positions 36–46 (PYPSGSMHVGH) match the 'HIGH' region motif. Positions 623–627 (KMSSS) match the 'KMSKS' region motif. A disordered region spans residues 910–943 (ASEVVIHTDPEEAPGPEDRKAGARPLRPGIWLEE). Residues 915 to 930 (IHTDPEEAPGPEDRKA) show a composition bias toward basic and acidic residues.

This sequence belongs to the class-I aminoacyl-tRNA synthetase family.

The protein resides in the cytoplasm. It carries out the reaction tRNA(Leu) + L-leucine + ATP = L-leucyl-tRNA(Leu) + AMP + diphosphate. The protein is Leucine--tRNA ligase of Methanopyrus kandleri (strain AV19 / DSM 6324 / JCM 9639 / NBRC 100938).